Reading from the N-terminus, the 647-residue chain is DNA mismatch repair protein MutL (647 aa).

The protein belongs to the DNA mismatch repair MutL/HexB family.

In terms of biological role, this protein is involved in the repair of mismatches in DNA. It is required for dam-dependent methyl-directed DNA mismatch repair. May act as a 'molecular matchmaker', a protein that promotes the formation of a stable complex between two or more DNA-binding proteins in an ATP-dependent manner without itself being part of a final effector complex. The protein is DNA mismatch repair protein MutL of Bacillus cereus (strain G9842).